We begin with the raw amino-acid sequence, 274 residues long: Nitrogenase iron protein (274 aa).

8-15 (GKGGIGKS) is an ATP binding site. C94 lines the [4Fe-4S] cluster pocket. Position 97 is an ADP-ribosylarginine; by dinitrogenase reductase ADP-ribosyltransferase (R97). Residue C131 participates in [4Fe-4S] cluster binding.

This sequence belongs to the NifH/BchL/ChlL family. As to quaternary structure, homodimer. It depends on [4Fe-4S] cluster as a cofactor. Post-translationally, the reversible ADP-ribosylation of Arg-97 inactivates the nitrogenase reductase and regulates nitrogenase activity.

It carries out the reaction N2 + 8 reduced [2Fe-2S]-[ferredoxin] + 16 ATP + 16 H2O = H2 + 8 oxidized [2Fe-2S]-[ferredoxin] + 2 NH4(+) + 16 ADP + 16 phosphate + 6 H(+). Functionally, the key enzymatic reactions in nitrogen fixation are catalyzed by the nitrogenase complex, which has 2 components: the iron protein and the molybdenum-iron protein. The sequence is that of Nitrogenase iron protein from Chlorobium limicola (strain DSM 245 / NBRC 103803 / 6330).